We begin with the raw amino-acid sequence, 574 residues long: Pentatricopeptide repeat-containing protein At5g25630 (574 aa).

The span at methionine 1–threonine 21 shows a compositional bias: basic and acidic residues. The disordered stretch occupies residues methionine 1–threonine 25. 12 PPR repeats span residues threonine 44–proline 78, serine 79–leucine 113, aspartate 114–proline 148, threonine 149–aspartate 183, asparagine 187–proline 221, aspartate 222–proline 258, asparagine 259–alanine 293, asparagine 294–alanine 328, aspartate 329–proline 363, aspartate 364–glutamate 394, asparagine 398–proline 432, and asparagine 433–proline 467.

It belongs to the PPR family. P subfamily.

The protein is Pentatricopeptide repeat-containing protein At5g25630 of Arabidopsis thaliana (Mouse-ear cress).